We begin with the raw amino-acid sequence, 1536 residues long: Alpha-2-macroglobulin (1536 aa).

The signal sequence occupies residues 1-23 (MGMKRLIFLVFLLISFSLFGGYA). A cross-link (isoglutamyl cysteine thioester (Cys-Gln)) is located at residues 919 to 922 (CVEQ).

It belongs to the protease inhibitor I39 (alpha-2-macroglobulin) family. Bacterial alpha-2-macroglobulin subfamily.

In terms of biological role, protects the bacterial cell from peptidases. This Thermotoga maritima (strain ATCC 43589 / DSM 3109 / JCM 10099 / NBRC 100826 / MSB8) protein is Alpha-2-macroglobulin.